Here is a 790-residue protein sequence, read N- to C-terminus: MIDSVKLRRDCAADFFSHYEYLCALQDSVPLPAVRACLRDGVLDFNADRLRAVDWAPLLSTLRVNRDLPLVAIKSSFQPWLGETVLRSGGADTHRICRNRVPAVRSKDISFQLCKALRGCLSVSGVLRNLELNGLILRERDLTSLTKGLSKSTSLVHLSLANCPIGDGGLEIICQGIKNSVTLKTVNFTGCNLTWQGACHMAKILKYQTMRRHEETWAESLRYRRPDLDCMAGLRRITLNCNTLIGDQGASAFADSLSEDLWLRALDLQQCGLTSEGAKALLEALETNRTLVVLDIRKNPLIDHSMMKAVIKKVLQNGRSADSEYQWVTSPSSKEPSKTAKQRKKTIVLGSSRKGKATIRIGLATKKPSSNGRKQGLGKDCYAPNPLPPGASGFLPWRTAERAKRSRSSSLIKTRDLSNHLKKSDFPVTVTVESPSSSETDETEDSSESVQEAPQKTSIKEETLQEKLEECLRQLKEERVIRLKADKRVSELEHENAQLRNINFSLSEALHAQSLTNMILDDEGVLGSIENSFQKFHAFLDLLKDAGLGQLATMAGIDQSDFHLLGRPQMNSTVNTPIQEQKALEDETLHPKQTATGQMQDIRFQKITSDALIPLPLNTVQDPASAQEAVGASRDHLGVVGLEQQEGSAAGFIAKTGSPLAGGIPGGRSQREEEVLSKHSRSSSEKGSTASEPSRRPSAERHPRKDLLSDADPPGNSESKGPGDRRSLLNEPIKSESLKKCISIKKENRIVTVSSKTIKSKPNLLEHSESDTLGSDFELQERVHSSAHLT.

5 disordered regions span residues 325–345 (YQWV…QRKK), 362–385 (GLAT…YAPN), 428–462 (VTVT…IKEE), 654–732 (AKTG…LNEP), and 756–790 (KTIK…AHLT). Phosphoserine is present on residues S330 and S332. Residues 428–438 (VTVTVESPSSS) show a composition bias toward low complexity. Residues 455 to 510 (QKTSIKEETLQEKLEECLRQLKEERVIRLKADKRVSELEHENAQLRNINFSLSEAL) adopt a coiled-coil conformation. Basic and acidic residues-rich tracts occupy residues 693–708 (PSRR…KDLL) and 721–732 (GPGDRRSLLNEP).

Belongs to the CEP78 family. In terms of assembly, interacts with PLK4. Interacts with FAM161A. Interacts with IFT20; regulating IFT20 stability and localization. Interacts with TTC21A; regulating TTC21A stability and localization. Interacts with USP16; promoting USP16-dependent deubiquitination of tektins. Interacts with DCAF1/VPRBP; promoting localization of the EDVP complex to centrosomes. Interacts with CEP350; promoting CEP78 localization to centrosome and centriole. In terms of tissue distribution, expressed by photoreceptor cells in the retina.

The protein localises to the cytoplasm. It localises to the cytoskeleton. It is found in the microtubule organizing center. Its subcellular location is the centrosome. The protein resides in the centriole. The protein localises to the cilium basal body. In terms of biological role, centriole wall protein that localizes to mature centrioles and regulates centriole and cilia biogenesis. Involved in centrosome duplication: required for efficient PLK4 centrosomal localization and PLK4-induced overduplication of centrioles. Involved in cilium biogenesis and controls cilium length. Acts as a regulator of protein stability by preventing ubiquitination of centrosomal proteins, such as CCP110 and tektins. Associates with the EDVP complex, preventing ubiquitination and degradation of CCP110. Promotes deubiquitination of tektin proteins (TEKT1, TEKT2, TEK3, TEKT4 and TEKT5) via its interaction with USP16. This is Centrosomal protein of 78 kDa from Mus musculus (Mouse).